The chain runs to 70 residues: MQFIAASIAAGIAAFGASIGNGMVISKTLEGMARQPEMAGTLRGTMFIGVGLIEAVPILSVVVAFMLMSR.

2 helical membrane-spanning segments follow: residues 3-23 and 47-67; these read FIAASIAAGIAAFGASIGNGM and FIGVGLIEAVPILSVVVAFML.

This sequence belongs to the ATPase C chain family. In terms of assembly, F-type ATPases have 2 components, F(1) - the catalytic core - and F(0) - the membrane proton channel. F(1) has five subunits: alpha(3), beta(3), gamma(1), delta(1), epsilon(1). F(0) has three main subunits: a(1), b(2) and c(10-14). The alpha and beta chains form an alternating ring which encloses part of the gamma chain. F(1) is attached to F(0) by a central stalk formed by the gamma and epsilon chains, while a peripheral stalk is formed by the delta and b chains.

The protein resides in the cell membrane. Functionally, f(1)F(0) ATP synthase produces ATP from ADP in the presence of a proton or sodium gradient. F-type ATPases consist of two structural domains, F(1) containing the extramembraneous catalytic core and F(0) containing the membrane proton channel, linked together by a central stalk and a peripheral stalk. During catalysis, ATP synthesis in the catalytic domain of F(1) is coupled via a rotary mechanism of the central stalk subunits to proton translocation. In terms of biological role, key component of the F(0) channel; it plays a direct role in translocation across the membrane. A homomeric c-ring of between 10-14 subunits forms the central stalk rotor element with the F(1) delta and epsilon subunits. The protein is ATP synthase subunit c of Lacticaseibacillus casei (strain BL23) (Lactobacillus casei).